Consider the following 722-residue polypeptide: Glycine--tRNA ligase beta subunit (722 aa).

Belongs to the class-II aminoacyl-tRNA synthetase family. As to quaternary structure, tetramer of two alpha and two beta subunits.

It localises to the cytoplasm. It carries out the reaction tRNA(Gly) + glycine + ATP = glycyl-tRNA(Gly) + AMP + diphosphate. This chain is Glycine--tRNA ligase beta subunit, found in Haemophilus influenzae (strain 86-028NP).